The chain runs to 233 residues: Lipoprotein-releasing system ATP-binding protein LolD (233 aa).

One can recognise an ABC transporter domain in the interval 6-233 (LQCDNLCKRY…TAELSLMGAE (228 aa)). Position 42–49 (42–49 (GSSGSGKS)) interacts with ATP.

Belongs to the ABC transporter superfamily. Lipoprotein translocase (TC 3.A.1.125) family. The complex is composed of two ATP-binding proteins (LolD) and two transmembrane proteins (LolC and LolE).

Its subcellular location is the cell inner membrane. Its function is as follows. Part of the ABC transporter complex LolCDE involved in the translocation of mature outer membrane-directed lipoproteins, from the inner membrane to the periplasmic chaperone, LolA. Responsible for the formation of the LolA-lipoprotein complex in an ATP-dependent manner. In Salmonella choleraesuis (strain SC-B67), this protein is Lipoprotein-releasing system ATP-binding protein LolD.